The chain runs to 201 residues: Probable molybdenum cofactor guanylyltransferase (201 aa).

GTP-binding positions include 6–8 (LAG), K18, D65, and D97. D97 is a Mg(2+) binding site.

The protein belongs to the MobA family. It depends on Mg(2+) as a cofactor.

It localises to the cytoplasm. It catalyses the reaction Mo-molybdopterin + GTP + H(+) = Mo-molybdopterin guanine dinucleotide + diphosphate. Its function is as follows. Transfers a GMP moiety from GTP to Mo-molybdopterin (Mo-MPT) cofactor (Moco or molybdenum cofactor) to form Mo-molybdopterin guanine dinucleotide (Mo-MGD) cofactor. The chain is Probable molybdenum cofactor guanylyltransferase from Staphylococcus epidermidis (strain ATCC 35984 / DSM 28319 / BCRC 17069 / CCUG 31568 / BM 3577 / RP62A).